A 414-amino-acid polypeptide reads, in one-letter code: 3-phosphoshikimate 1-carboxyvinyltransferase (414 aa).

Residues lysine 20, serine 21, and arginine 25 each contribute to the 3-phosphoshikimate site. Lysine 20 is a binding site for phosphoenolpyruvate. The phosphoenolpyruvate site is built by glycine 85 and arginine 113. 3-phosphoshikimate-binding residues include serine 154, serine 155, glutamine 156, serine 181, aspartate 296, and lysine 323. Glutamine 156 contacts phosphoenolpyruvate. The active-site Proton acceptor is aspartate 296. Phosphoenolpyruvate is bound by residues arginine 327, arginine 371, and lysine 395.

The protein belongs to the EPSP synthase family. Monomer.

It is found in the cytoplasm. It catalyses the reaction 3-phosphoshikimate + phosphoenolpyruvate = 5-O-(1-carboxyvinyl)-3-phosphoshikimate + phosphate. It functions in the pathway metabolic intermediate biosynthesis; chorismate biosynthesis. Catalyzes the transfer of the enolpyruvyl moiety of phosphoenolpyruvate (PEP) to the 5-hydroxyl of shikimate-3-phosphate (S3P) to produce enolpyruvyl shikimate-3-phosphate and inorganic phosphate. This is 3-phosphoshikimate 1-carboxyvinyltransferase from Saccharolobus islandicus (strain M.14.25 / Kamchatka #1) (Sulfolobus islandicus).